Here is a 245-residue protein sequence, read N- to C-terminus: tRNA pseudouridine synthase A (245 aa).

Asp52 functions as the Nucleophile in the catalytic mechanism. Tyr111 contacts substrate.

This sequence belongs to the tRNA pseudouridine synthase TruA family. In terms of assembly, homodimer.

It carries out the reaction uridine(38/39/40) in tRNA = pseudouridine(38/39/40) in tRNA. Formation of pseudouridine at positions 38, 39 and 40 in the anticodon stem and loop of transfer RNAs. This chain is tRNA pseudouridine synthase A, found in Bradyrhizobium sp. (strain BTAi1 / ATCC BAA-1182).